Consider the following 432-residue polypeptide: Trigger factor (432 aa).

Positions 163–248 constitute a PPIase FKBP-type domain; sequence GDIAVIDFEG…LKALNKKELP (86 aa).

It belongs to the FKBP-type PPIase family. Tig subfamily.

It is found in the cytoplasm. It catalyses the reaction [protein]-peptidylproline (omega=180) = [protein]-peptidylproline (omega=0). Involved in protein export. Acts as a chaperone by maintaining the newly synthesized protein in an open conformation. Functions as a peptidyl-prolyl cis-trans isomerase. The protein is Trigger factor of Caldanaerobacter subterraneus subsp. tengcongensis (strain DSM 15242 / JCM 11007 / NBRC 100824 / MB4) (Thermoanaerobacter tengcongensis).